We begin with the raw amino-acid sequence, 202 residues long: Imidazole glycerol phosphate synthase subunit HisH 2 (202 aa).

One can recognise a Glutamine amidotransferase type-1 domain in the interval 1-202; it reads MIAIIDYGMG…KLMENFIKQA (202 aa). C80 acts as the Nucleophile in catalysis. Active-site residues include H183 and E185.

Heterodimer of HisH and HisF.

It localises to the cytoplasm. It carries out the reaction 5-[(5-phospho-1-deoxy-D-ribulos-1-ylimino)methylamino]-1-(5-phospho-beta-D-ribosyl)imidazole-4-carboxamide + L-glutamine = D-erythro-1-(imidazol-4-yl)glycerol 3-phosphate + 5-amino-1-(5-phospho-beta-D-ribosyl)imidazole-4-carboxamide + L-glutamate + H(+). It catalyses the reaction L-glutamine + H2O = L-glutamate + NH4(+). The protein operates within amino-acid biosynthesis; L-histidine biosynthesis; L-histidine from 5-phospho-alpha-D-ribose 1-diphosphate: step 5/9. IGPS catalyzes the conversion of PRFAR and glutamine to IGP, AICAR and glutamate. The HisH subunit provides the glutamine amidotransferase activity that produces the ammonia necessary to HisF for the synthesis of IGP and AICAR. This Methanococcus maripaludis (strain DSM 14266 / JCM 13030 / NBRC 101832 / S2 / LL) protein is Imidazole glycerol phosphate synthase subunit HisH 2 (hisH2).